A 668-amino-acid polypeptide reads, in one-letter code: tRNA 5-methylaminomethyl-2-thiouridine biosynthesis bifunctional protein MnmC (668 aa).

The tRNA (mnm(5)s(2)U34)-methyltransferase stretch occupies residues 1 to 245 (MKHYSIQPAN…KREMLCGVME (245 aa)). An FAD-dependent cmnm(5)s(2)U34 oxidoreductase region spans residues 270 to 668 (IGGGIASALL…LLKGKAVKAG (399 aa)).

This sequence in the N-terminal section; belongs to the methyltransferase superfamily. tRNA (mnm(5)s(2)U34)-methyltransferase family. The protein in the C-terminal section; belongs to the DAO family. The cofactor is FAD.

The protein localises to the cytoplasm. The enzyme catalyses 5-aminomethyl-2-thiouridine(34) in tRNA + S-adenosyl-L-methionine = 5-methylaminomethyl-2-thiouridine(34) in tRNA + S-adenosyl-L-homocysteine + H(+). Functionally, catalyzes the last two steps in the biosynthesis of 5-methylaminomethyl-2-thiouridine (mnm(5)s(2)U) at the wobble position (U34) in tRNA. Catalyzes the FAD-dependent demodification of cmnm(5)s(2)U34 to nm(5)s(2)U34, followed by the transfer of a methyl group from S-adenosyl-L-methionine to nm(5)s(2)U34, to form mnm(5)s(2)U34. The protein is tRNA 5-methylaminomethyl-2-thiouridine biosynthesis bifunctional protein MnmC of Escherichia coli O157:H7.